Consider the following 528-residue polypeptide: Gamma-taxilin (528 aa).

Residues 1–10 (MATRVEEAAR) show a composition bias toward basic and acidic residues. The disordered stretch occupies residues 1–36 (MATRVEEAARGRGGGAEEATEAGRGGRRRSPRQKFE). 2 positions are modified to omega-N-methylarginine: Arg-12 and Arg-24. Phosphoserine is present on residues Ser-79, Ser-86, Ser-97, and Ser-105. The segment at 102–130 (TQESREEIPGGEARTDPPDGQQDSECNRN) is disordered. The span at 104–118 (ESREEIPGGEARTDP) shows a compositional bias: basic and acidic residues. Residues 153 to 464 (EEKLAALCKK…LKEQVSIKAA (312 aa)) are a coiled coil. At Tyr-283 the chain carries Phosphotyrosine. The disordered stretch occupies residues 486–528 (HKELNTSSKRALGAHLEAEPKSQRSAVQKPPSTGSAPAIESVD). Residues 508 to 520 (QRSAVQKPPSTGS) are compositionally biased toward polar residues. Position 517 is a phosphoserine (Ser-517).

This sequence belongs to the taxilin family. Binds to the C-terminal coiled coil region of syntaxin family members STX1A, STX3A and STX4A. Forms a heterodimer with ATF4 in osteoblasts. As to expression, ubiquitously expressed. Expressed at high level in heart and skeletal muscle. Expressed in brain, placenta, lung, liver, kidney and pancreas.

It localises to the nucleus membrane. It is found in the cytoplasm. The protein localises to the cytosol. Functionally, may be involved in intracellular vesicle traffic. Inhibits ATF4-mediated transcription, possibly by dimerizing with ATF4 to form inactive dimers that cannot bind DNA. May be involved in regulating bone mass density through an ATF4-dependent pathway. May be involved in cell cycle progression. The sequence is that of Gamma-taxilin (TXLNG) from Homo sapiens (Human).